Consider the following 430-residue polypeptide: Histidine--tRNA ligase (430 aa).

This sequence belongs to the class-II aminoacyl-tRNA synthetase family. In terms of assembly, homodimer.

The protein localises to the cytoplasm. The catalysed reaction is tRNA(His) + L-histidine + ATP = L-histidyl-tRNA(His) + AMP + diphosphate + H(+). The protein is Histidine--tRNA ligase (hisS) of Chlamydia pneumoniae (Chlamydophila pneumoniae).